We begin with the raw amino-acid sequence, 423 residues long: 26S proteasome regulatory subunit 6B homolog (423 aa).

Residue 207-214 (GPPGTGKT) coordinates ATP.

The protein belongs to the AAA ATPase family.

It is found in the cytoplasm. It localises to the nucleus. In terms of biological role, the 26S proteasome is involved in the ATP-dependent degradation of ubiquitinated proteins. The regulatory (or ATPase) complex confers ATP dependency and substrate specificity to the 26S complex. The chain is 26S proteasome regulatory subunit 6B homolog (tbpA) from Aspergillus niger.